Here is a 974-residue protein sequence, read N- to C-terminus: Probable proton ATPase 1A (974 aa).

The segment covering 1–23 (MSSKKYELDAAAFEDKPESHSDA) has biased composition (basic and acidic residues). The tract at residues 1–61 (MSSKKYELDA…ATDLLPPSKG (61 aa)) is disordered. At 1–92 (MSSKKYELDA…KTPSWLIYVR (92 aa)) the chain is on the cytoplasmic side. Residues 93-112 (GLWGPMPAALWIAIIIEFAL) traverse the membrane as a helical segment. The Extracellular segment spans residues 113-117 (ENWPD). A helical transmembrane segment spans residues 118–137 (GAILFAIQIANATIGWYETI). The Cytoplasmic portion of the chain corresponds to 138–264 (KAGDAVAALK…LGNIHVILRR (127 aa)). Residues 265 to 286 (VMFSLCAISFMLCMCCFIYLLA) form a helical membrane-spanning segment. Topologically, residues 287 to 294 (RFYETFRH) are extracellular. A helical transmembrane segment spans residues 295–321 (ALQFAVVVLVVSIPIALEIVVTTTLAV). Over 322-630 (GSKHLSKHKI…AVHGATDAAR (309 aa)) the chain is Cytoplasmic. The active-site 4-aspartylphosphate intermediate is aspartate 351. The Mg(2+) site is built by aspartate 605 and aspartate 609. The helical transmembrane segment at 631-651 (AAADMVLTEPGLSVVVEAMLV) threads the bilayer. Topologically, residues 652-661 (SREVFQRMLS) are extracellular. A helical membrane pass occupies residues 662-684 (FLTYRISATLQLVCFFFIACFSL). At 685-697 (TPKAYGSVDPHFQ) the chain is on the cytoplasmic side. A helical membrane pass occupies residues 698–712 (FFHLPVLMFMLITLL). Topologically, residues 713–737 (NDGCLMTIGYDHVIPSERPQKWNLP) are extracellular. Aspartate 714 is a binding site for Mg(2+). Residues 738–761 (VVFVSASILAAVACGSSLMLLWIG) traverse the membrane as a helical segment. Topologically, residues 762–812 (LEGYSSQYYENSWFHRLGLAQLPQGKLVTMMYLKISISDFLTLFSSRTGGH) are cytoplasmic. Residues 813–840 (FFFYMPPSPILFCGAIISLLVSTMAASF) traverse the membrane as a helical segment. Residues 841 to 868 (WHKSRPDNVLTEGLAWGQTNAEKLLPLW) lie on the Extracellular side of the membrane. Residues 869–887 (VWIYCIVWWFVQDVVKVLA) traverse the membrane as a helical segment. At 888–974 (HICMDAVDLF…VNVYVSRDQK (87 aa)) the chain is on the cytoplasmic side. The span at 950-959 (GLREDTHSPI) shows a compositional bias: basic and acidic residues. Residues 950–974 (GLREDTHSPIEEASPVNVYVSRDQK) are disordered.

The protein belongs to the cation transport ATPase (P-type) (TC 3.A.3) family. Type IIIA subfamily.

The protein localises to the membrane. It catalyses the reaction ATP + H2O + H(+)(in) = ADP + phosphate + 2 H(+)(out). In Leishmania donovani, this protein is Probable proton ATPase 1A (H1A).